A 131-amino-acid chain; its full sequence is MRHYEIVFMVHPDQSEQVPGMIERYTGAITAAAGTIHRLEDWGRRQLAYPINKLHKAHYVLLNVEAPQEAIDELETNFRFNDAVIRSMVMRTKHAVTEASPMVKAKDERRERREDFANETADDSEAGDSEE.

The disordered stretch occupies residues 98–131 (EASPMVKAKDERRERREDFANETADDSEAGDSEE). Residues 104–116 (KAKDERRERREDF) are compositionally biased toward basic and acidic residues. The span at 120 to 131 (TADDSEAGDSEE) shows a compositional bias: acidic residues.

Belongs to the bacterial ribosomal protein bS6 family.

Functionally, binds together with bS18 to 16S ribosomal RNA. The chain is Small ribosomal subunit protein bS6 from Klebsiella pneumoniae (strain 342).